The primary structure comprises 360 residues: Phosphoserine aminotransferase (360 aa).

Arg41 serves as a coordination point for L-glutamate. Residues Trp101, Thr152, Asp172, and Gln195 each coordinate pyridoxal 5'-phosphate. N6-(pyridoxal phosphate)lysine is present on Lys196. Residue 237–238 participates in pyridoxal 5'-phosphate binding; it reads NT.

The protein belongs to the class-V pyridoxal-phosphate-dependent aminotransferase family. SerC subfamily. Homodimer. Pyridoxal 5'-phosphate serves as cofactor.

It localises to the cytoplasm. It carries out the reaction O-phospho-L-serine + 2-oxoglutarate = 3-phosphooxypyruvate + L-glutamate. It catalyses the reaction 4-(phosphooxy)-L-threonine + 2-oxoglutarate = (R)-3-hydroxy-2-oxo-4-phosphooxybutanoate + L-glutamate. It participates in amino-acid biosynthesis; L-serine biosynthesis; L-serine from 3-phospho-D-glycerate: step 2/3. The protein operates within cofactor biosynthesis; pyridoxine 5'-phosphate biosynthesis; pyridoxine 5'-phosphate from D-erythrose 4-phosphate: step 3/5. In terms of biological role, catalyzes the reversible conversion of 3-phosphohydroxypyruvate to phosphoserine and of 3-hydroxy-2-oxo-4-phosphonooxybutanoate to phosphohydroxythreonine. This chain is Phosphoserine aminotransferase, found in Burkholderia vietnamiensis (strain G4 / LMG 22486) (Burkholderia cepacia (strain R1808)).